The chain runs to 326 residues: Ornithine carbamoyltransferase (326 aa).

Carbamoyl phosphate-binding positions include 57–60 (STRT), glutamine 84, arginine 108, and 135–138 (HPTQ). L-ornithine-binding positions include asparagine 169, aspartate 233, and 237 to 238 (SM). 275-276 (CL) contributes to the carbamoyl phosphate binding site.

It belongs to the aspartate/ornithine carbamoyltransferase superfamily. OTCase family.

Its subcellular location is the cytoplasm. The enzyme catalyses carbamoyl phosphate + L-ornithine = L-citrulline + phosphate + H(+). It functions in the pathway amino-acid biosynthesis; L-arginine biosynthesis; L-arginine from L-ornithine and carbamoyl phosphate: step 1/3. In terms of biological role, reversibly catalyzes the transfer of the carbamoyl group from carbamoyl phosphate (CP) to the N(epsilon) atom of ornithine (ORN) to produce L-citrulline. This chain is Ornithine carbamoyltransferase, found in Escherichia coli O6:K15:H31 (strain 536 / UPEC).